Reading from the N-terminus, the 269-residue chain is 3-methyl-2-oxobutanoate hydroxymethyltransferase (269 aa).

Residues aspartate 46 and aspartate 85 each coordinate Mg(2+). Residues 46-47 (DS), aspartate 85, and lysine 114 contribute to the 3-methyl-2-oxobutanoate site. Residue glutamate 116 participates in Mg(2+) binding. Glutamate 183 serves as the catalytic Proton acceptor.

It belongs to the PanB family. In terms of assembly, homodecamer; pentamer of dimers. The cofactor is Mg(2+).

It localises to the cytoplasm. The catalysed reaction is 3-methyl-2-oxobutanoate + (6R)-5,10-methylene-5,6,7,8-tetrahydrofolate + H2O = 2-dehydropantoate + (6S)-5,6,7,8-tetrahydrofolate. It functions in the pathway cofactor biosynthesis; (R)-pantothenate biosynthesis; (R)-pantoate from 3-methyl-2-oxobutanoate: step 1/2. Functionally, catalyzes the reversible reaction in which hydroxymethyl group from 5,10-methylenetetrahydrofolate is transferred onto alpha-ketoisovalerate to form ketopantoate. This is 3-methyl-2-oxobutanoate hydroxymethyltransferase from Methylococcus capsulatus (strain ATCC 33009 / NCIMB 11132 / Bath).